A 277-amino-acid chain; its full sequence is Small ribosomal subunit protein uS5 (277 aa).

A disordered region spans residues Ala18 to Ala40. Residues Pro29 to Ala40 show a composition bias toward basic and acidic residues. The S5 DRBM domain maps to Leu87–Val150.

It belongs to the universal ribosomal protein uS5 family. Component of the small ribosomal subunit.

The protein localises to the cytoplasm. The protein resides in the nucleus. It is found in the nucleolus. In terms of biological role, component of the ribosome, a large ribonucleoprotein complex responsible for the synthesis of proteins in the cell. The small ribosomal subunit (SSU) binds messenger RNAs (mRNAs) and translates the encoded message by selecting cognate aminoacyl-transfer RNA (tRNA) molecules. The large subunit (LSU) contains the ribosomal catalytic site termed the peptidyl transferase center (PTC), which catalyzes the formation of peptide bonds, thereby polymerizing the amino acids delivered by tRNAs into a polypeptide chain. The nascent polypeptides leave the ribosome through a tunnel in the LSU and interact with protein factors that function in enzymatic processing, targeting, and the membrane insertion of nascent chains at the exit of the ribosomal tunnel. Plays a role in the assembly and function of the 40S ribosomal subunit. Mutations in this protein affects the control of translational fidelity. Involved in nucleolar processing of pre-18S ribosomal RNA and ribosome assembly. This chain is Small ribosomal subunit protein uS5 (rps2), found in Ictalurus punctatus (Channel catfish).